The sequence spans 214 residues: External core antigen (214 aa).

The signal sequence occupies residues 1 to 19 (MQLFHLCLIISCTCPTVQA). The HBEAG stretch occupies residues 25–27 (GWL). The tract at residues 165 to 214 (NAPILSTLPETTVVRRRDRGRSPRRRTPSPRRRRSPSPRRRRSQSRESQC) is disordered. Basic residues predominate over residues 178–207 (VRRRDRGRSPRRRTPSPRRRRSPSPRRRRS). The stretch at 186–192 (SPRRRTP) is one 1; half-length repeat. The tract at residues 186-208 (SPRRRTPSPRRRRSPSPRRRRSQ) is 3 X 8 AA repeats of S-P-R-R-R-R-S-[PQ]. Positions 186-214 (SPRRRTPSPRRRRSPSPRRRRSQSRESQC) are excised as a propeptide. Tandem repeats lie at residues 193-200 (SPRRRRSP) and 201-208 (SPRRRRSQ).

Belongs to the orthohepadnavirus precore antigen family. As to quaternary structure, homodimerizes. Post-translationally, phosphorylated. In terms of processing, cleaved by host furin.

It is found in the secreted. It localises to the host nucleus. Functionally, may regulate immune response to the intracellular capsid in acting as a T-cell tolerogen, by having an immunoregulatory effect which prevents destruction of infected cells by cytotoxic T-cells. This immune regulation may predispose to chronicity during perinatal infections and prevent severe liver injury during adult infections. This chain is External core antigen, found in Hepatitis B virus genotype A2 subtype adw2 (strain Rutter 1979) (HBV-A).